A 29-amino-acid chain; its full sequence is Probable small toxic protein BsrH (29 aa).

Residues 6–26 traverse the membrane as a helical segment; it reads FQALMLMLAFGSFIIALLTYI.

It is found in the cell membrane. Possible toxic component of a type I toxin-antitoxin (TA) system; an overlapping antisense RNA has been identified. This Bacillus subtilis (strain 168) protein is Probable small toxic protein BsrH.